The chain runs to 613 residues: Dihydroxy-acid dehydratase (613 aa).

A Mg(2+)-binding site is contributed by Asp-81. A [2Fe-2S] cluster-binding site is contributed by Cys-122. Mg(2+) is bound by residues Asp-123 and Lys-124. An N6-carboxylysine modification is found at Lys-124. [2Fe-2S] cluster is bound at residue Cys-197. A Mg(2+)-binding site is contributed by Glu-493. The active-site Proton acceptor is Ser-519.

This sequence belongs to the IlvD/Edd family. As to quaternary structure, homodimer. It depends on [2Fe-2S] cluster as a cofactor. Mg(2+) is required as a cofactor.

The enzyme catalyses (2R)-2,3-dihydroxy-3-methylbutanoate = 3-methyl-2-oxobutanoate + H2O. It catalyses the reaction (2R,3R)-2,3-dihydroxy-3-methylpentanoate = (S)-3-methyl-2-oxopentanoate + H2O. The protein operates within amino-acid biosynthesis; L-isoleucine biosynthesis; L-isoleucine from 2-oxobutanoate: step 3/4. It functions in the pathway amino-acid biosynthesis; L-valine biosynthesis; L-valine from pyruvate: step 3/4. Functionally, functions in the biosynthesis of branched-chain amino acids. Catalyzes the dehydration of (2R,3R)-2,3-dihydroxy-3-methylpentanoate (2,3-dihydroxy-3-methylvalerate) into 2-oxo-3-methylpentanoate (2-oxo-3-methylvalerate) and of (2R)-2,3-dihydroxy-3-methylbutanoate (2,3-dihydroxyisovalerate) into 2-oxo-3-methylbutanoate (2-oxoisovalerate), the penultimate precursor to L-isoleucine and L-valine, respectively. The chain is Dihydroxy-acid dehydratase from Corynebacterium glutamicum (strain R).